The sequence spans 233 residues: Large ribosomal subunit protein uL1 (233 aa).

This sequence belongs to the universal ribosomal protein uL1 family. As to quaternary structure, part of the 50S ribosomal subunit.

Binds directly to 23S rRNA. The L1 stalk is quite mobile in the ribosome, and is involved in E site tRNA release. Functionally, protein L1 is also a translational repressor protein, it controls the translation of the L11 operon by binding to its mRNA. The sequence is that of Large ribosomal subunit protein uL1 from Brucella melitensis biotype 1 (strain ATCC 23456 / CCUG 17765 / NCTC 10094 / 16M).